Consider the following 203-residue polypeptide: Small ribosomal subunit protein uS4 (203 aa).

One can recognise an S4 RNA-binding domain in the interval 93-156 (RRLDNVVYRL…MKVPAILEAV (64 aa)).

This sequence belongs to the universal ribosomal protein uS4 family. Part of the 30S ribosomal subunit. Contacts protein S5. The interaction surface between S4 and S5 is involved in control of translational fidelity.

One of the primary rRNA binding proteins, it binds directly to 16S rRNA where it nucleates assembly of the body of the 30S subunit. Functionally, with S5 and S12 plays an important role in translational accuracy. The protein is Small ribosomal subunit protein uS4 of Streptococcus equi subsp. equi (strain 4047).